Consider the following 481-residue polypeptide: Tripartite motif-containing protein 10 (481 aa).

The RING-type zinc-finger motif lies at 16 to 61 (CPICQGTLREPVTIDCGHNFCRACLTRYCEIPGPDLEESPTCPLCK). The B box-type zinc finger occupies 94–135 (GEEDVCQEHGEKIYFFCEDDEMQLCVVCREAGEHATHTMRFL). Residues Cys99, His102, Cys121, and His127 each coordinate Zn(2+). Residues 150–177 (LKCLRKEREEIQEIQSRENKRMQVLLTQ) adopt a coiled-coil conformation. Residues 292 to 481 (REMKMFLEKL…GRGSSFSLSS (190 aa)) enclose the B30.2/SPRY domain.

It belongs to the TRIM/RBCC family. In terms of assembly, interacts with IFNAR1; this interaction prevents association of IFNAR1 with TYK2.

It localises to the cytoplasm. Functionally, E3 ligase that plays an essential role in the differentiation and survival of terminal erythroid cells. May directly bind to PTEN and promote its ubiquitination, resulting in its proteasomal degradation and activation of hypertrophic signaling. In addition, plays a role in immune response regulation by repressing the phosphorylation of STAT1 and STAT2 in the interferon/JAK/STAT signaling pathway independent of its E3 ligase activity. Mechanistically, interacts with the intracellular domain of IFNAR1 and thereby inhibits the association between TYK2 and IFNAR1. This Homo sapiens (Human) protein is Tripartite motif-containing protein 10 (TRIM10).